A 405-amino-acid chain; its full sequence is G1/S-specific cyclin-D (405 aa).

Residues 76-200 (FYNCMEYEEA…LIVTTLQWET (125 aa)) enclose the Cyclin N-terminal domain. Residues 301–405 (YTSEDAEKTE…STPPKIFKTL (105 aa)) are disordered. A compositionally biased stretch (polar residues) spans 311-321 (PTPSAPASTQE). The segment covering 326–335 (QELKELKEEP) has biased composition (basic and acidic residues). The segment covering 358 to 380 (SEQTPSTPLNDSGFSSDVSSPAS) has biased composition (polar residues).

It belongs to the cyclin family. Cyclin D subfamily. As to quaternary structure, interacts with cdk-4; the interaction is likely involved in regulating cdk-4 activity.

In terms of biological role, in association with cdk-4, regulates the progression through the G1 phase of the cell cycle during postembryonic development. Regulates proliferation of the coelomocyte lineage and intestinal cells during late embryogenesis. In complex with cdk-4, involved in sex determination during gonadogenesis by regulating the asymmetric division of the somatic gonadal precursor cell (SGP). This is G1/S-specific cyclin-D from Caenorhabditis elegans.